The primary structure comprises 214 residues: Cdc42 effector protein 2 (214 aa).

The residue at position 2 (serine 2) is an N-acetylserine. A CRIB domain is found at 30–44 (ISPPLGDFRHTIHIG). A phosphoserine mark is found at serine 31, serine 101, serine 137, serine 141, and serine 145. Residues 119–177 (LTLPTAQAPPKPPRLHLESPQPSPQPSPQGAGNVDVWRIPEAGSPHNGMSPEPEAEEPF) form a disordered region.

Belongs to the BORG/CEP family. In terms of assembly, interacts with CDC42 and RHOQ in a GTP-dependent manner, and with SEPT7.

The protein resides in the endomembrane system. It is found in the cytoplasm. The protein localises to the cytoskeleton. Functionally, probably involved in the organization of the actin cytoskeleton. May act downstream of CDC42 to induce actin filament assembly leading to cell shape changes. Induces pseudopodia formation in fibroblasts in a CDC42-dependent manner. In Mus musculus (Mouse), this protein is Cdc42 effector protein 2 (Cdc42ep2).